The following is a 131-amino-acid chain: Small ribosomal subunit protein uS11 (131 aa).

It belongs to the universal ribosomal protein uS11 family. As to quaternary structure, part of the 30S ribosomal subunit. Interacts with proteins S7 and S18. Binds to IF-3.

In terms of biological role, located on the platform of the 30S subunit, it bridges several disparate RNA helices of the 16S rRNA. Forms part of the Shine-Dalgarno cleft in the 70S ribosome. The protein is Small ribosomal subunit protein uS11 of Deinococcus geothermalis (strain DSM 11300 / CIP 105573 / AG-3a).